Reading from the N-terminus, the 373-residue chain is Alanine racemase (373 aa).

Catalysis depends on Lys-37, which acts as the Proton acceptor; specific for D-alanine. The residue at position 37 (Lys-37) is an N6-(pyridoxal phosphate)lysine. Arg-135 serves as a coordination point for substrate. The active-site Proton acceptor; specific for L-alanine is the Tyr-266. A substrate-binding site is contributed by Met-313.

This sequence belongs to the alanine racemase family. Requires pyridoxal 5'-phosphate as cofactor.

It catalyses the reaction L-alanine = D-alanine. It functions in the pathway amino-acid biosynthesis; D-alanine biosynthesis; D-alanine from L-alanine: step 1/1. In terms of biological role, catalyzes the interconversion of L-alanine and D-alanine. This organism is able to use both L- and D-alanine as a nitrogen source. May also prevent D-alanine from interfering with the use of L-alanine. The polypeptide is Alanine racemase (alr) (Methanococcus maripaludis (strain DSM 14266 / JCM 13030 / NBRC 101832 / S2 / LL)).